The sequence spans 35 residues: Coenzyme PQQ synthesis protein A (35 aa).

Residues E16–Y20 constitute a cross-link (pyrroloquinoline quinone (Glu-Tyr)).

Belongs to the PqqA family.

The protein operates within cofactor biosynthesis; pyrroloquinoline quinone biosynthesis. Functionally, required for coenzyme pyrroloquinoline quinone (PQQ) biosynthesis. PQQ is probably formed by cross-linking a specific glutamate to a specific tyrosine residue and excising these residues from the peptide. The polypeptide is Coenzyme PQQ synthesis protein A (Roseobacter denitrificans (strain ATCC 33942 / OCh 114) (Erythrobacter sp. (strain OCh 114))).